A 342-amino-acid polypeptide reads, in one-letter code: Bifunctional terpene synthase Agr4 (342 aa).

Mg(2+) is bound by residues aspartate 87, asparagine 222, serine 226, and glutamate 230. Positions 87–91 (DEVSD) match the DDXXD motif motif. Positions 308 and 309 each coordinate (2E,6E)-farnesyl diphosphate.

This sequence belongs to the terpene synthase family. The cofactor is Mg(2+).

It catalyses the reaction (2E,6E)-farnesyl diphosphate = delta-cadinene + diphosphate. The catalysed reaction is (2E,6E)-farnesyl diphosphate = gamma-muurolene + diphosphate. It carries out the reaction (2E,6E)-farnesyl diphosphate = beta-copaene + diphosphate. The enzyme catalyses (2E)-geranyl diphosphate = beta-myrcene + diphosphate. Terpene cyclase that catalyzes the cyclization of farnesyl diphosphate (FPP) to various sesquiterpenes, including beta-copaene, alpha-cubebene, cadina-1(6),4-diene, gamma-muurolene, delta-cadinene, epizonarene, epicubenol and cubenol. Agr4 is also able to use the monoterpene precursor geranyl diphosphate (GPP) as substrates to synthesize the monoterpene beta-myrcene. Delta-cadinene is the major product of Agr4. The chain is Bifunctional terpene synthase Agr4 from Cyclocybe aegerita (Black poplar mushroom).